Here is a 600-residue protein sequence, read N- to C-terminus: Aspartate--tRNA(Asp/Asn) ligase (600 aa).

An L-aspartate-binding site is contributed by Glu-183. The tract at residues Gln-207–Lys-210 is aspartate. Residue Arg-229 coordinates L-aspartate. Residues Arg-229–Glu-231 and Gln-238 contribute to the ATP site. Residue His-456 participates in L-aspartate binding. Glu-490 contacts ATP. Arg-497 is an L-aspartate binding site. Residue Gly-542–Arg-545 participates in ATP binding.

Belongs to the class-II aminoacyl-tRNA synthetase family. Type 1 subfamily. In terms of assembly, homodimer.

It localises to the cytoplasm. It carries out the reaction tRNA(Asx) + L-aspartate + ATP = L-aspartyl-tRNA(Asx) + AMP + diphosphate. In terms of biological role, aspartyl-tRNA synthetase with relaxed tRNA specificity since it is able to aspartylate not only its cognate tRNA(Asp) but also tRNA(Asn). Reaction proceeds in two steps: L-aspartate is first activated by ATP to form Asp-AMP and then transferred to the acceptor end of tRNA(Asp/Asn). This chain is Aspartate--tRNA(Asp/Asn) ligase, found in Moorella thermoacetica (strain ATCC 39073 / JCM 9320).